A 372-amino-acid chain; its full sequence is DNA damage-repair/toleration protein DRT100 (372 aa).

An N-terminal signal peptide occupies residues 1 to 26 (MRKLLASPFSSLLAVVFISVISVVRC). 9 LRR repeats span residues 136–158 (SLRILDLAGNKITGEIPAEIGKL), 160–183 (KLAVLNLAENQMSGEIPASLTSLI), 184–205 (ELKHLELTENGITGVIPADFGS), 208–230 (MLSRVLLGRNELTGSIPESISGM), 232–254 (RLADLDLSKNHIEGPIPEWMGNM), 256–277 (VLSLLNLDCNSLTGPIPGSLLS), 280–302 (GLDVANLSRNALEGTIPDVFGSK), 304–326 (YLVSLDLSHNSLSGRIPDSLSSA), and 328–350 (FVGHLDISHNKLCGRIPTGFPFD).

In terms of biological role, this protein is able to complement bacterial recA mutations, but its native function in the plant is not known. This Arabidopsis thaliana (Mouse-ear cress) protein is DNA damage-repair/toleration protein DRT100 (DRT100).